The chain runs to 503 residues: MEFSVKSGSPEKQRSACIVVGVFEPRRLSPIAEQLDKISDGYISALLRRGELEGKVGQSLLLHHVPNILSERILLIGCGKERELDERQYKQVIQKTINALNETGSMEAVCFLTELHVKGRNTYWKVRQAVETAKETLYTFDQLKSNKVELRRPLRKMVFNVPTRRELTSGERAIQHGLAIAAGIKAAKDLGNMPPNICNAAYLASQARQLADTYSQNTITRVIGEEQMKELGMNAYLAVGQGSQNESLMSVIEYKGDPNPENRPIVLVGKGLTFDSGGISIKPADSMDEMKYDMCGAATVYGVMRMAAELALPLNIIGVLAGCENMVDGRAYRPGDVLTTMSGQTVEVLNTDAEGRLVLCDTLTYVERYEPDVVIDVATLTGACVIALGHHITGLMANHNPLAHELLSASEQSGDRAWRLPLTDEFQEQLESNFADMANIGGRPGGAITAGCFLSRFTRKYSWAHLDIAGTAWRSGKAKGATGRPVALLSQFLLNRAGQNDVE.

2 residues coordinate Mn(2+): Lys270 and Asp275. The active site involves Lys282. Residues Asp293, Asp352, and Glu354 each coordinate Mn(2+). The active site involves Arg356.

It belongs to the peptidase M17 family. Mn(2+) is required as a cofactor.

The protein localises to the cytoplasm. It carries out the reaction Release of an N-terminal amino acid, Xaa-|-Yaa-, in which Xaa is preferably Leu, but may be other amino acids including Pro although not Arg or Lys, and Yaa may be Pro. Amino acid amides and methyl esters are also readily hydrolyzed, but rates on arylamides are exceedingly low.. It catalyses the reaction Release of an N-terminal amino acid, preferentially leucine, but not glutamic or aspartic acids.. Presumably involved in the processing and regular turnover of intracellular proteins. Catalyzes the removal of unsubstituted N-terminal amino acids from various peptides. This chain is Probable cytosol aminopeptidase, found in Pectobacterium atrosepticum (strain SCRI 1043 / ATCC BAA-672) (Erwinia carotovora subsp. atroseptica).